Reading from the N-terminus, the 156-residue chain is Small ribosomal subunit protein uS7 (156 aa).

The protein belongs to the universal ribosomal protein uS7 family. As to quaternary structure, part of the 30S ribosomal subunit. Contacts proteins S9 and S11.

Its function is as follows. One of the primary rRNA binding proteins, it binds directly to 16S rRNA where it nucleates assembly of the head domain of the 30S subunit. Is located at the subunit interface close to the decoding center, probably blocks exit of the E-site tRNA. In Anaeromyxobacter sp. (strain Fw109-5), this protein is Small ribosomal subunit protein uS7.